The primary structure comprises 191 residues: Protein GrpE (191 aa).

Residues 1-22 are disordered; the sequence is MKDKHNQEHDHLSQEEPESCEK.

The protein belongs to the GrpE family. Homodimer.

The protein localises to the cytoplasm. Functionally, participates actively in the response to hyperosmotic and heat shock by preventing the aggregation of stress-denatured proteins, in association with DnaK and GrpE. It is the nucleotide exchange factor for DnaK and may function as a thermosensor. Unfolded proteins bind initially to DnaJ; upon interaction with the DnaJ-bound protein, DnaK hydrolyzes its bound ATP, resulting in the formation of a stable complex. GrpE releases ADP from DnaK; ATP binding to DnaK triggers the release of the substrate protein, thus completing the reaction cycle. Several rounds of ATP-dependent interactions between DnaJ, DnaK and GrpE are required for fully efficient folding. The sequence is that of Protein GrpE from Helicobacter pylori (strain Shi470).